The primary structure comprises 207 residues: Vexin (207 aa).

The disordered stretch occupies residues Arg-65–Ser-104.

This sequence belongs to the vexin family.

It localises to the cell membrane. Its subcellular location is the nucleus. Functionally, required for neurogenesis in the neural plate and retina. Strongly cooperates with neural bHLH factors to promote neurogenesis. The protein is Vexin of Mus musculus (Mouse).